The chain runs to 344 residues: MYAMKEEDCLQTFHNLQDYQDQFHLHHHPQILPWSSTSLPSFDPLHFPSNPTRYSDPVHYFNRRASSSSSSFDYNDGFVSPPPSMDHPQNHLRILSEALGPIMRRGSSFGFDGEIMGKLSAQEVMDAKALAASKSHSEAERRRRERINTHLAKLRSILPNTTKTDKASLLAEVIQHMKELKRQTSQITDTYQVPTECDDLTVDSSYNDEEGNLVIRASFCCQDRTDLMHDVINALKSLRLRTLKAEIATVGGRVKNILFLSREYDDEEDHDSYRRNFDGDDVEDYDEERMMNNRVSSIEEALKAVIEKCVHNNDESNDNNNLEKSSSGGIKRQRTSKMVNRCYN.

The bHLH domain maps to 131–180 (AASKSHSEAERRRRERINTHLAKLRSILPNTTKTDKASLLAEVIQHMKEL). Residues 313-344 (NDESNDNNNLEKSSSGGIKRQRTSKMVNRCYN) are disordered. A compositionally biased stretch (low complexity) spans 318–327 (DNNNLEKSSS).

In terms of assembly, homodimer. Interacts with LHW.

Its subcellular location is the nucleus. Its function is as follows. Transcription factor required for MONOPTEROS-dependent root initiation in embryo. Transcriptionally controlled by MONOPTEROS. The protein is Transcription factor AIG1 (BHLH32) of Arabidopsis thaliana (Mouse-ear cress).